A 277-amino-acid polypeptide reads, in one-letter code: uncharacterized protein (277 aa).

This is an uncharacterized protein from Methanocaldococcus jannaschii (strain ATCC 43067 / DSM 2661 / JAL-1 / JCM 10045 / NBRC 100440) (Methanococcus jannaschii).